The sequence spans 164 residues: Ubiquitin-fold modifier-conjugating enzyme 1 (164 aa).

Cysteine 116 acts as the Glycyl thioester intermediate in catalysis.

This sequence belongs to the ubiquitin-conjugating enzyme family. UFC1 subfamily.

Functionally, E2-like enzyme which forms an intermediate with UFM1 via a thioester linkage. This chain is Ubiquitin-fold modifier-conjugating enzyme 1, found in Drosophila ananassae (Fruit fly).